A 478-amino-acid polypeptide reads, in one-letter code: Transposase for insertion sequence element IS231D (478 aa).

The protein belongs to the transposase 11 family.

Its function is as follows. Involved in the transposition of the insertion sequence. This Bacillus thuringiensis subsp. finitimus protein is Transposase for insertion sequence element IS231D.